Here is a 186-residue protein sequence, read N- to C-terminus: Large ribosomal subunit protein uL22 (186 aa).

Residue Ser158 is modified to Phosphoserine. Residues 159–186 form a disordered region; the sequence is KATDDEPAKKKLSKKKLQRQKEKMLRSE. Thr161 carries the post-translational modification Phosphothreonine. Residues 177–186 are compositionally biased toward basic and acidic residues; it reads RQKEKMLRSE.

Belongs to the universal ribosomal protein uL22 family.

This is Large ribosomal subunit protein uL22 (RpL17) from Drosophila melanogaster (Fruit fly).